We begin with the raw amino-acid sequence, 113 residues long: Putative pterin-4-alpha-carbinolamine dehydratase (113 aa).

Belongs to the pterin-4-alpha-carbinolamine dehydratase family.

It catalyses the reaction (4aS,6R)-4a-hydroxy-L-erythro-5,6,7,8-tetrahydrobiopterin = (6R)-L-erythro-6,7-dihydrobiopterin + H2O. This chain is Putative pterin-4-alpha-carbinolamine dehydratase, found in Hydrogenovibrio crunogenus (strain DSM 25203 / XCL-2) (Thiomicrospira crunogena).